The primary structure comprises 120 residues: MFALPGYDAFLGFLLIAAAVPVLALVTNKLLAPKSRAGERQLTYESGMEPIGGAWIQFNIRYYMFALVFVIFDVETVFLYPWAVAFNRLGLLAFIEALIFIAILLVALAYAWRKGALEWS.

The next 3 helical transmembrane spans lie at 6–26 (GYDA…LALV), 64–84 (MFAL…PWAV), and 89–109 (LGLL…VALA).

Belongs to the complex I subunit 3 family. As to quaternary structure, NDH-1 can be composed of about 15 different subunits; different subcomplexes with different compositions have been identified which probably have different functions.

The protein localises to the cellular thylakoid membrane. The enzyme catalyses a plastoquinone + NADH + (n+1) H(+)(in) = a plastoquinol + NAD(+) + n H(+)(out). It carries out the reaction a plastoquinone + NADPH + (n+1) H(+)(in) = a plastoquinol + NADP(+) + n H(+)(out). Its function is as follows. NDH-1 shuttles electrons from an unknown electron donor, via FMN and iron-sulfur (Fe-S) centers, to quinones in the respiratory and/or the photosynthetic chain. The immediate electron acceptor for the enzyme in this species is believed to be plastoquinone. Couples the redox reaction to proton translocation, and thus conserves the redox energy in a proton gradient. Cyanobacterial NDH-1 also plays a role in inorganic carbon-concentration. The polypeptide is NAD(P)H-quinone oxidoreductase subunit 3 (Synechococcus sp. (strain CC9902)).